The sequence spans 305 residues: GS homeobox 2 (305 aa).

Disordered regions lie at residues 115–151 and 259–305; these read DAQF…AAAA and KKEG…ISPL. The span at 123-140 shows a compositional bias: basic residues; that stretch reads SHAHHHHHPPQHHHHHHQ. A compositionally biased stretch (low complexity) spans 141-151; that stretch reads PQQPGSAAAAA. The homeobox DNA-binding region spans 203 to 262; sequence GKRMRTAFTSTQLLELEREFSSNMYLSRLRRIEIATYLNLSEKQVKIWFQNRRVKHKKEG.

The protein belongs to the Antp homeobox family.

It is found in the nucleus. Functionally, transcription factor that binds 5'-CNAATTAG-3' DNA sequence and regulates the expression of numerous genes including genes important for brain development. During telencephalic development, causes ventralization of pallial progenitors and, depending on the developmental stage, specifies different neuronal fates. At early stages, necessary and sufficient to correctly specify the ventral lateral ganglionic eminence (LGE) and its major derivatives, the striatal projection neurons. At later stages, may specify LGE progenitors toward dorsal LGE fates, including olfactory bulb interneurons. This is GS homeobox 2 (Gsx2) from Mus musculus (Mouse).